Reading from the N-terminus, the 267-residue chain is Membrane-spanning 4-domains subfamily A member 12 (267 aa).

Over 1 to 91 (MMSSKPTSHA…MNFKEEAKAL (91 aa)) the chain is Cytoplasmic. A helical transmembrane segment spans residues 92–112 (GVIQIMVGLMHIGFGIVLCLI). Over 113-120 (SFSFREVL) the chain is Extracellular. The helical transmembrane segment at 121 to 141 (GFASTAVIGGYPFWGGLSFII) threads the bilayer. Over 142-160 (SGSLSVSASKELSRCLVKG) the chain is Cytoplasmic. The chain crosses the membrane as a helical span at residues 161–181 (SLGMNIVSSILAFIGVILLLV). Over 182-200 (DMCINGVAGQDYWAVLSGK) the chain is Extracellular. A helical transmembrane segment spans residues 201–221 (GISATLMIFSLLEFFVACATA). Residues 222-267 (HFANQANTTTNMSVLVIPNMYESNPVTPASSSAPPRCNNYSANAPK) lie on the Cytoplasmic side of the membrane. The segment at 248–267 (TPASSSAPPRCNNYSANAPK) is disordered.

This sequence belongs to the MS4A family.

It is found in the membrane. Its function is as follows. May be involved in signal transduction as a component of a multimeric receptor complex. The chain is Membrane-spanning 4-domains subfamily A member 12 (MS4A12) from Homo sapiens (Human).